Consider the following 376-residue polypeptide: Thymidine kinase (376 aa).

The segment at 1–39 (MASYPCHQHASAFDQAARSRGHSNRRTALRPRRQQEATE) is disordered. Positions 19–32 (SRGHSNRRTALRPR) are enriched in basic residues. ATP is bound at residue 56–63 (GPHGMGKT). Catalysis depends on E83, which acts as the Proton acceptor. Y101 and Q125 together coordinate substrate. R216 contacts ATP. Position 222 (R222) interacts with substrate.

Belongs to the herpesviridae thymidine kinase family. Homodimer.

The enzyme catalyses thymidine + ATP = dTMP + ADP + H(+). In terms of biological role, catalyzes the transfer of the gamma-phospho group of ATP to thymidine to generate dTMP in the salvage pathway of pyrimidine synthesis. The dTMP serves as a substrate for DNA polymerase during viral DNA replication. Allows the virus to be reactivated and to grow in non-proliferative cells lacking a high concentration of phosphorylated nucleic acid precursors. This chain is Thymidine kinase, found in Human herpesvirus 1 (strain CL101) (HHV-1).